Consider the following 1083-residue polypeptide: MPTNFTVVPVEAHADGGGDETAERTEAPGTPEGPEPERPSPGDGNPRENSPFLNNVEVEQESFFEGKNMALFEEEMDSNPMVSSLLNKLANYTNLSQGVVEHEEDEESRRREAKAPRMGTFIGVYLPCLQNILGVILFLRLTWIVGVAGVLESFLIVAMCCTCTMLTAISMSAIATNGVVPAGGSYYMISRSLGPEFGGAVGLCFYLGTTFAGAMYILGTIEIFLTYISPGAAIFQAEAAGGEAAAMLHNMRVYGTCTLVLMALVVFVGVKYVNKLALVFLACVVLSILAIYAGVIKSAFDPPDIPVCLLGNRTLSRRSFDACVKAYGIHNNSATSALWGLFCNGSQPSAACDEYFIQNNVTEIQGIPGAASGVFLENLWSTYAHAGAFVEKKGVPSVPVAEESRASALPYVLTDIAASFTLLVGIYFPSVTGIMAGSNRSGDLKDAQKSIPTGTILAIVTTSFIYLSCIVLFGACIEGVVLRDKFGEALQGNLVIGMLAWPSPWVIVIGSFFSTCGAGLQSLTGAPRLLQAIARDGIVPFLQVFGHGKANGEPTWALLLTVLICETGILIASLDSVAPILSMFFLMCYLFVNLACAVQTLLRTPNWRPRFKFYHWTLSFLGMSLCLALMFICSWYYALSAMLIAGCIYKYIEYRGAEKEWGDGIRGLSLNAARYALLRVEHGPPHTKNWRPQVLVMLNLDAEQAVKHPRLLSFTSQLKAGKGLTIVGSVLEGTYLDKHMEAQRAEENIRSLMSTEKTKGFCQLVVSSSLRDGMSHLIQSAGLGGLKHNTVLMAWPASWKQEDNPFSWKNFVDTVRDTTAAHQALLVAKNVDSFPQNQERFGGGHIDVWWIVHDGGMLMLLPFLLRQHKVWRKCRMRIFTVAQVDDNSIQMKKDLQMFLYHLRISAEVEVVEMVENDISAFTYERTLMMEQRSQMLKQMQLSKNEQEREAQLIHDRNTASHTAAAARTQAPPTPDKVQMTWTREKLIAEKYRSRDTSLSGFKDLFSMKPDQSNVRRMHTAVKLNGVVLNKSQDAQLVLLNMPGPPKNRQGDENYMEFLEVLTEGLNRVLLVRGGGREVITIYS.

Positions 1–52 (MPTNFTVVPVEAHADGGGDETAERTEAPGTPEGPEPERPSPGDGNPRENSPF) are disordered. Topologically, residues 1-119 (MPTNFTVVPV…RREAKAPRMG (119 aa)) are cytoplasmic. Residues 12–26 (AHADGGGDETAERTE) show a composition bias toward basic and acidic residues. T30 bears the Phosphothreonine mark. S50 and S62 each carry phosphoserine. A discontinuously helical membrane pass occupies residues 120-142 (TFIGVYLPCLQNILGVILFLRLT). K(+) is bound by residues N131 and I132. V135 provides a ligand contact to chloride. Residues 143-149 (WIVGVAG) lie on the Extracellular side of the membrane. The helical transmembrane segment at 150–172 (VLESFLIVAMCCTCTMLTAISMS) threads the bilayer. The Cytoplasmic portion of the chain corresponds to 173–196 (AIATNGVVPAGGSYYMISRSLGPE). The helical transmembrane segment at 197–225 (FGGAVGLCFYLGTTFAGAMYILGTIEIFL) threads the bilayer. Residues 226-249 (TYISPGAAIFQAEAAGGEAAAMLH) lie on the Extracellular side of the membrane. Helical transmembrane passes span 250–270 (NMRV…FVGV) and 272–300 (YVNK…KSAF). Over 301–419 (DPPDIPVCLL…PYVLTDIAAS (119 aa)) the chain is Extracellular. Cystine bridges form between C308/C323 and C343/C352. N312 carries an N-linked (GlcNAc...) asparagine glycan. N-linked (GlcNAc...) asparagine glycosylation occurs at N360. A helical membrane pass occupies residues 420 to 440 (FTLLVGIYFPSVTGIMAGSNR). P429 and T432 together coordinate K(+). P429 contacts chloride. Residues G433 and I434 each contribute to the chloride site. At 441 to 450 (SGDLKDAQKS) the chain is on the cytoplasmic side. A helical membrane pass occupies residues 451–473 (IPTGTILAIVTTSFIYLSCIVLF). Residues 474 to 504 (GACIEGVVLRDKFGEALQGNLVIGMLAWPSP) lie on the Extracellular side of the membrane. A helical membrane pass occupies residues 505 to 531 (WVIVIGSFFSTCGAGLQSLTGAPRLLQ). Residues 532 to 554 (AIARDGIVPFLQVFGHGKANGEP) lie on the Cytoplasmic side of the membrane. 2 helical membrane-spanning segments follow: residues 555-571 (TWAL…GILI) and 574-598 (LDSV…ACAV). Residue Y589 coordinates chloride. The Cytoplasmic segment spans residues 599 to 612 (QTLLRTPNWRPRFK). 2 consecutive transmembrane segments (helical) span residues 613–632 (FYHW…LMFI) and 636–651 (YYAL…IYKY). Topologically, residues 652 to 1083 (IEYRGAEKEW…GGREVITIYS (432 aa)) are cytoplasmic. A scissor helix region spans residues 664–680 (GIRGLSLNAARYALLRV). T973 and T980 each carry phosphothreonine.

This sequence belongs to the SLC12A transporter family. K/Cl co-transporter subfamily. Homodimer; adopts a domain-swap conformation at the scissor helices connecting the transmembrane domain and C-terminal domain. Heterodimer with K-Cl cotransporter SLC12A5. Detected in muscle, brain, lung, heart and kidney.

It is found in the cell membrane. The catalysed reaction is K(+)(in) + chloride(in) = K(+)(out) + chloride(out). With respect to regulation, activated by N-ethylmaleimide (NEM). Inhibited by furosemide, DIDS and bumetanide. The inhibition is much stronger in the presence of 50 mM K(+) in the uptake medium. Inhibited by DIOA. Inhibited by WNK3. Its function is as follows. Mediates electroneutral potassium-chloride cotransport when activated by cell swelling. May mediate K(+) uptake into Deiters' cells in the cochlea and contribute to K(+) recycling in the inner ear. Important for the survival of cochlear outer and inner hair cells and the maintenance of the organ of Corti. May be required for basolateral Cl(-) extrusion in the kidney and contribute to renal acidification. The protein is Solute carrier family 12 member 7 of Homo sapiens (Human).